The primary structure comprises 65 residues: Stress-associated endoplasmic reticulum protein 2 (65 aa).

Residues G38–I58 traverse the membrane as a helical segment.

The protein belongs to the RAMP4 family. Interacts with SEC61B, SEC61A1 and the SEC61 complex. Interacts with CANX.

Its subcellular location is the membrane. It is found in the endoplasmic reticulum membrane. Interacts with target proteins during their translocation into the lumen of the endoplasmic reticulum. Protects unfolded target proteins against degradation during ER stress. May facilitate glycosylation of target proteins after termination of ER stress. May modulate the use of N-glycosylation sites on target proteins. In Bos taurus (Bovine), this protein is Stress-associated endoplasmic reticulum protein 2 (SERP2).